A 148-amino-acid polypeptide reads, in one-letter code: Lysozyme C-1 (148 aa).

The first 18 residues, 1–18, serve as a signal peptide directing secretion; that stretch reads MKALLVLGFLLLSASVQA. In terms of domain architecture, C-type lysozyme spans 19–148; the sequence is KIYERCQFAR…LSGYIRNCGV (130 aa). Disulfide bonds link Cys-24–Cys-146, Cys-48–Cys-134, Cys-83–Cys-99, and Cys-95–Cys-113. Residues Glu-53 and Asp-71 contribute to the active site.

The protein belongs to the glycosyl hydrolase 22 family. As to quaternary structure, monomer. In terms of tissue distribution, expressed in lung, small intestine and spleen.

It localises to the secreted. It carries out the reaction Hydrolysis of (1-&gt;4)-beta-linkages between N-acetylmuramic acid and N-acetyl-D-glucosamine residues in a peptidoglycan and between N-acetyl-D-glucosamine residues in chitodextrins.. Its function is as follows. Lysozymes have primarily a bacteriolytic function; those in tissues and body fluids are associated with the monocyte-macrophage system and enhance the activity of immunoagents. In the intestine they may also have a digestive function. This is Lysozyme C-1 (Lyz1) from Rattus norvegicus (Rat).